Consider the following 410-residue polypeptide: Tryptophan synthase beta chain (410 aa).

At lysine 98 the chain carries N6-(pyridoxal phosphate)lysine.

This sequence belongs to the TrpB family. Tetramer of two alpha and two beta chains. Pyridoxal 5'-phosphate serves as cofactor.

The enzyme catalyses (1S,2R)-1-C-(indol-3-yl)glycerol 3-phosphate + L-serine = D-glyceraldehyde 3-phosphate + L-tryptophan + H2O. It participates in amino-acid biosynthesis; L-tryptophan biosynthesis; L-tryptophan from chorismate: step 5/5. The beta subunit is responsible for the synthesis of L-tryptophan from indole and L-serine. The chain is Tryptophan synthase beta chain from Roseobacter denitrificans (strain ATCC 33942 / OCh 114) (Erythrobacter sp. (strain OCh 114)).